A 430-amino-acid polypeptide reads, in one-letter code: Adenylosuccinate synthetase (430 aa).

GTP is bound by residues 12 to 18 (GDEGKGK) and 40 to 42 (GHT). The Proton acceptor role is filled by Asp-13. Mg(2+) is bound by residues Asp-13 and Gly-40. IMP-binding positions include 13-16 (DEGK), 38-41 (NAGH), Thr-128, Arg-142, Gln-223, Thr-238, and Arg-302. The active-site Proton donor is His-41. 298–304 (TTTGRPR) contacts substrate. GTP-binding positions include Arg-304, 330-332 (SID), and 412-414 (SVG).

It belongs to the adenylosuccinate synthetase family. In terms of assembly, homodimer. It depends on Mg(2+) as a cofactor.

The protein localises to the cytoplasm. It carries out the reaction IMP + L-aspartate + GTP = N(6)-(1,2-dicarboxyethyl)-AMP + GDP + phosphate + 2 H(+). Its pathway is purine metabolism; AMP biosynthesis via de novo pathway; AMP from IMP: step 1/2. Functionally, plays an important role in the de novo pathway of purine nucleotide biosynthesis. Catalyzes the first committed step in the biosynthesis of AMP from IMP. This Exiguobacterium sibiricum (strain DSM 17290 / CCUG 55495 / CIP 109462 / JCM 13490 / 255-15) protein is Adenylosuccinate synthetase.